Consider the following 251-residue polypeptide: Ubiquinone/menaquinone biosynthesis C-methyltransferase UbiE (251 aa).

S-adenosyl-L-methionine is bound by residues Thr-74, Asp-95, 123 to 124 (NA), and Ser-140.

It belongs to the class I-like SAM-binding methyltransferase superfamily. MenG/UbiE family.

The catalysed reaction is a 2-demethylmenaquinol + S-adenosyl-L-methionine = a menaquinol + S-adenosyl-L-homocysteine + H(+). It carries out the reaction a 2-methoxy-6-(all-trans-polyprenyl)benzene-1,4-diol + S-adenosyl-L-methionine = a 5-methoxy-2-methyl-3-(all-trans-polyprenyl)benzene-1,4-diol + S-adenosyl-L-homocysteine + H(+). It participates in quinol/quinone metabolism; menaquinone biosynthesis; menaquinol from 1,4-dihydroxy-2-naphthoate: step 2/2. It functions in the pathway cofactor biosynthesis; ubiquinone biosynthesis. Methyltransferase required for the conversion of demethylmenaquinol (DMKH2) to menaquinol (MKH2) and the conversion of 2-polyprenyl-6-methoxy-1,4-benzoquinol (DDMQH2) to 2-polyprenyl-3-methyl-6-methoxy-1,4-benzoquinol (DMQH2). This chain is Ubiquinone/menaquinone biosynthesis C-methyltransferase UbiE, found in Citrobacter koseri (strain ATCC BAA-895 / CDC 4225-83 / SGSC4696).